We begin with the raw amino-acid sequence, 159 residues long: Transcriptional repressor NrdR (159 aa).

Residues 1 to 26 (MRCPFCAHDNSQVKDSRPSEDNTSIR) form a disordered region. A zinc finger lies at 3–34 (CPFCAHDNSQVKDSRPSEDNTSIRRRRQCEGC). Residues 11-24 (SQVKDSRPSEDNTS) are compositionally biased toward basic and acidic residues. Positions 49 to 139 (VVVVKSGERR…VYRDFTEARD (91 aa)) constitute an ATP-cone domain.

This sequence belongs to the NrdR family. Requires Zn(2+) as cofactor.

In terms of biological role, negatively regulates transcription of bacterial ribonucleotide reductase nrd genes and operons by binding to NrdR-boxes. This chain is Transcriptional repressor NrdR, found in Novosphingobium aromaticivorans (strain ATCC 700278 / DSM 12444 / CCUG 56034 / CIP 105152 / NBRC 16084 / F199).